A 137-amino-acid polypeptide reads, in one-letter code: Peptide methionine sulfoxide reductase MsrB (137 aa).

Residues 1–33 (MSNNQDRPGQITDESLRERLSPEAYAVTRRAGT) form a disordered region. Positions 13–135 (DESLRERLSP…NSLSLDFKAA (123 aa)) constitute a MsrB domain. Zn(2+) is bound by residues cysteine 52, cysteine 55, cysteine 101, and cysteine 104. Cysteine 124 functions as the Nucleophile in the catalytic mechanism.

This sequence belongs to the MsrB Met sulfoxide reductase family. It depends on Zn(2+) as a cofactor.

The catalysed reaction is L-methionyl-[protein] + [thioredoxin]-disulfide + H2O = L-methionyl-(R)-S-oxide-[protein] + [thioredoxin]-dithiol. The protein is Peptide methionine sulfoxide reductase MsrB of Thioalkalivibrio sulfidiphilus (strain HL-EbGR7).